Here is a 358-residue protein sequence, read N- to C-terminus: 3-isopropylmalate dehydrogenase (358 aa).

Residues Arg-92, Arg-102, Arg-130, and Asp-224 each coordinate substrate. The Mg(2+) site is built by Asp-224, Asp-248, and Asp-252. Gly-282–Asn-294 is an NAD(+) binding site.

It belongs to the isocitrate and isopropylmalate dehydrogenases family. LeuB type 1 subfamily. As to quaternary structure, homodimer. The cofactor is Mg(2+). Mn(2+) is required as a cofactor.

It localises to the cytoplasm. It carries out the reaction (2R,3S)-3-isopropylmalate + NAD(+) = 4-methyl-2-oxopentanoate + CO2 + NADH. It participates in amino-acid biosynthesis; L-leucine biosynthesis; L-leucine from 3-methyl-2-oxobutanoate: step 3/4. Functionally, catalyzes the oxidation of 3-carboxy-2-hydroxy-4-methylpentanoate (3-isopropylmalate) to 3-carboxy-4-methyl-2-oxopentanoate. The product decarboxylates to 4-methyl-2 oxopentanoate. The polypeptide is 3-isopropylmalate dehydrogenase (Bordetella pertussis (strain Tohama I / ATCC BAA-589 / NCTC 13251)).